We begin with the raw amino-acid sequence, 179 residues long: MEAAIEFDEIVKKLLNIYINDICTMGEKRLLNNYEKSILDRIYKSCEYIKKNYELDFNSMYNQININDITTSDIKSKIIESLLIDSRPSVKLATLSFISLIAEKWGEKNRTKIMEILSNEIVEKISNNGKDFIDFIDRDDDDIVDDYVLITNYLKITIFGAILGITAYYICKYLLKSIF.

The chain crosses the membrane as a helical span at residues 148 to 170 (VLITNYLKITIFGAILGITAYYI).

As to quaternary structure, interacts with host BAX and BAK1.

The protein resides in the host mitochondrion. The protein localises to the host membrane. Its function is as follows. Plays a role in the inhibition of host apoptosis by sequestering and inactivating several proapoptotic BCL-2 proteins, including BAK1 and BAX. Prevents the conformational activation of both of them. In Deerpox virus (strain Mule deer/United States/W-848-83/1983) (DPV), this protein is Apoptosis regulator DPV022 (DPV022).